A 55-amino-acid chain; its full sequence is Conotoxin Cal22b (55 aa).

Residues 1 to 5 (GRPSA) constitute a propeptide that is removed on maturation.

Contains 4 disulfide bonds. In terms of tissue distribution, expressed by the venom duct.

It localises to the secreted. Its function is as follows. Probable neurotoxin with unknown target. Possibly targets ion channels. This is Conotoxin Cal22b from Californiconus californicus (California cone).